The primary structure comprises 281 residues: NAD kinase (281 aa).

Catalysis depends on Asp61, which acts as the Proton acceptor. NAD(+) is bound by residues 61 to 62, 134 to 135, Arg145, Asp164, 175 to 180, and Gln234; these read DG, ND, and TAYSLS.

Belongs to the NAD kinase family. Requires a divalent metal cation as cofactor.

The protein localises to the cytoplasm. It catalyses the reaction NAD(+) + ATP = ADP + NADP(+) + H(+). Involved in the regulation of the intracellular balance of NAD and NADP, and is a key enzyme in the biosynthesis of NADP. Catalyzes specifically the phosphorylation on 2'-hydroxyl of the adenosine moiety of NAD to yield NADP. The polypeptide is NAD kinase (Clostridium botulinum (strain 657 / Type Ba4)).